Consider the following 303-residue polypeptide: ASC1-like protein (303 aa).

6 consecutive transmembrane segments (helical) span residues 19–39 (YEDF…RFLL), 81–101 (CIYF…EPWF), 127–147 (ALYM…IFWE), 153–173 (FGVS…SYNI), 212–232 (YLCL…VLWS), and 255–275 (YIFN…WVLI). Residues 72 to 284 (RKFKESAWKC…IYRMLVKQIQ (213 aa)) form the TLC domain.

Its subcellular location is the endoplasmic reticulum membrane. Mediates resistance to sphinganine-analog mycotoxins (SAMs) by restoring the sphingolipid biosynthesis. Could salvage the transport of GPI-anchored proteins from the endoplasmic reticulum to the Golgi apparatus in ceramides-depleted cells after SAM exposure. The sequence is that of ASC1-like protein from Solanum lycopersicum (Tomato).